A 1379-amino-acid chain; its full sequence is DNA-directed RNA polymerase subunit beta (1379 aa).

Belongs to the RNA polymerase beta chain family. The RNAP catalytic core consists of 2 alpha, 1 beta, 1 beta' and 1 omega subunit. When a sigma factor is associated with the core the holoenzyme is formed, which can initiate transcription.

The catalysed reaction is RNA(n) + a ribonucleoside 5'-triphosphate = RNA(n+1) + diphosphate. Its function is as follows. DNA-dependent RNA polymerase catalyzes the transcription of DNA into RNA using the four ribonucleoside triphosphates as substrates. This Rhizobium etli (strain ATCC 51251 / DSM 11541 / JCM 21823 / NBRC 15573 / CFN 42) protein is DNA-directed RNA polymerase subunit beta.